The chain runs to 114 residues: Ribosome-binding factor A (114 aa).

The protein belongs to the RbfA family. Monomer. Binds 30S ribosomal subunits, but not 50S ribosomal subunits or 70S ribosomes.

Its subcellular location is the cytoplasm. One of several proteins that assist in the late maturation steps of the functional core of the 30S ribosomal subunit. Associates with free 30S ribosomal subunits (but not with 30S subunits that are part of 70S ribosomes or polysomes). Required for efficient processing of 16S rRNA. May interact with the 5'-terminal helix region of 16S rRNA. The sequence is that of Ribosome-binding factor A from Listeria welshimeri serovar 6b (strain ATCC 35897 / DSM 20650 / CCUG 15529 / CIP 8149 / NCTC 11857 / SLCC 5334 / V8).